The primary structure comprises 840 residues: Homeobox-leucine zipper protein HOX9 (840 aa).

2 disordered regions span residues 1–26 and 135–160; these read MAAA…AGMD and NPSL…DASN. The segment covering 12–21 has biased composition (gly residues); the sequence is GSDGGGGGYD. A DNA-binding region (homeobox) is located at residues 26–89; it reads DSGKYVRYTP…NRRCRDKQRK (64 aa). Residues 86-135 adopt a coiled-coil conformation; that stretch reads KQRKEASRLQAVNRKLTAMNKLLMEENERLQKQVSQLVHENAYMKQQLQN. One can recognise an START domain in the interval 157–385; the sequence is DASNPSGLLT…IAQETSGEVV (229 aa).

It belongs to the HD-ZIP homeobox family. Class III subfamily. As to expression, expressed in seedlings, roots, stems, leaf sheaths and blades and panicles.

Its subcellular location is the nucleus. Functionally, probable transcription factor. The chain is Homeobox-leucine zipper protein HOX9 (HOX9) from Oryza sativa subsp. japonica (Rice).